Reading from the N-terminus, the 207-residue chain is Probable nicotinate-nucleotide adenylyltransferase (207 aa).

The protein belongs to the NadD family.

The catalysed reaction is nicotinate beta-D-ribonucleotide + ATP + H(+) = deamido-NAD(+) + diphosphate. It functions in the pathway cofactor biosynthesis; NAD(+) biosynthesis; deamido-NAD(+) from nicotinate D-ribonucleotide: step 1/1. Catalyzes the reversible adenylation of nicotinate mononucleotide (NaMN) to nicotinic acid adenine dinucleotide (NaAD). This is Probable nicotinate-nucleotide adenylyltransferase from Desulfitobacterium hafniense (strain DSM 10664 / DCB-2).